We begin with the raw amino-acid sequence, 464 residues long: NAD(P) transhydrogenase subunit beta (464 aa).

6 consecutive transmembrane segments (helical) span residues 54–74 (VQAYAWIVLAIAIGGAIGTVI), 86–106 (LVAAFHSLVGMAAVLVATGAL), 126–146 (VEMSLGLAVGAITFSGSVIAF), 164–184 (HPLNAVLGILLVVLLVVFAAT), 191–211 (FALMILAFALGFLLIIPIGGA), and 227–247 (AAAGIGFTLGNPLLIIAGALV). NADP(+) is bound by residues 316 to 317 (YG), 348 to 353 (VAGRMP), 390 to 394 (GANDV), 425 to 432 (KRSMASGY), and 451 to 452 (DA).

This sequence belongs to the PNT beta subunit family. In terms of assembly, complex of an alpha and a beta chain; in Rhodospirillum, the alpha chain seems to be made of two subunits.

Its subcellular location is the cell inner membrane. It carries out the reaction NAD(+) + NADPH + H(+)(in) = NADH + NADP(+) + H(+)(out). The transhydrogenation between NADH and NADP is coupled to respiration and ATP hydrolysis and functions as a proton pump across the membrane. This chain is NAD(P) transhydrogenase subunit beta (pntB), found in Rhodospirillum rubrum (strain ATCC 11170 / ATH 1.1.1 / DSM 467 / LMG 4362 / NCIMB 8255 / S1).